The sequence spans 359 residues: Ornithine cyclodeaminase (359 aa).

Arg53 and Lys77 together coordinate L-ornithine. NAD(+) contacts are provided by residues Thr92, Arg120, 147–148 (AQ), Asp169, Thr209, 232–235 (VGGD), Lys239, and Ser300. An L-ornithine-binding site is contributed by Arg120. An L-ornithine-binding site is contributed by Asp235. Residue Asp235 is the Proton donor/acceptor of the active site. Val301 contacts L-ornithine.

Belongs to the ornithine cyclodeaminase/mu-crystallin family. It depends on NAD(+) as a cofactor.

It carries out the reaction L-ornithine = L-proline + NH4(+). It functions in the pathway amino-acid biosynthesis; L-proline biosynthesis; L-proline from L-ornithine: step 1/1. Catalyzes the conversion of L-ornithine into L-proline with release of ammonia. The chain is Ornithine cyclodeaminase from Brucella abortus biovar 1 (strain 9-941).